The primary structure comprises 666 residues: tRNA 5-methylaminomethyl-2-thiouridine biosynthesis bifunctional protein MnmC (666 aa).

Residues Met1 to Ala245 form a tRNA (mnm(5)s(2)U34)-methyltransferase region. Residues Ile270 to Lys666 form an FAD-dependent cmnm(5)s(2)U34 oxidoreductase region.

This sequence in the N-terminal section; belongs to the methyltransferase superfamily. tRNA (mnm(5)s(2)U34)-methyltransferase family. It in the C-terminal section; belongs to the DAO family. FAD is required as a cofactor.

The protein resides in the cytoplasm. It carries out the reaction 5-aminomethyl-2-thiouridine(34) in tRNA + S-adenosyl-L-methionine = 5-methylaminomethyl-2-thiouridine(34) in tRNA + S-adenosyl-L-homocysteine + H(+). Catalyzes the last two steps in the biosynthesis of 5-methylaminomethyl-2-thiouridine (mnm(5)s(2)U) at the wobble position (U34) in tRNA. Catalyzes the FAD-dependent demodification of cmnm(5)s(2)U34 to nm(5)s(2)U34, followed by the transfer of a methyl group from S-adenosyl-L-methionine to nm(5)s(2)U34, to form mnm(5)s(2)U34. The polypeptide is tRNA 5-methylaminomethyl-2-thiouridine biosynthesis bifunctional protein MnmC (Citrobacter koseri (strain ATCC BAA-895 / CDC 4225-83 / SGSC4696)).